A 157-amino-acid polypeptide reads, in one-letter code: Phosphomannomutase (157 aa).

Residue Ser-98 is the Phosphoserine intermediate of the active site. Residue Ser-98 coordinates Mg(2+).

This sequence belongs to the phosphohexose mutase family. Mg(2+) is required as a cofactor.

The catalysed reaction is alpha-D-mannose 1-phosphate = D-mannose 6-phosphate. It functions in the pathway nucleotide-sugar biosynthesis; GDP-alpha-D-mannose biosynthesis; alpha-D-mannose 1-phosphate from D-fructose 6-phosphate: step 2/2. It participates in capsule biogenesis; capsule polysaccharide biosynthesis. Its function is as follows. Involved in the biosynthesis of the K2 capsular polysaccharide biosynthesis. The polypeptide is Phosphomannomutase (manB) (Klebsiella pneumoniae).